A 533-amino-acid chain; its full sequence is Phospho-2-dehydro-3-deoxyheptonate aldolase 1, chloroplastic (533 aa).

The N-terminal 57 residues, M1–V57, are a transit peptide targeting the chloroplast. Residues S47–I56 show a composition bias toward polar residues. Positions S47–T70 are disordered. Residues V57–T70 show a composition bias toward low complexity. Position 145 (C145) interacts with Mn(2+). Substrate is bound by residues R184, E343–R344, K366, and R397. Mn(2+)-binding residues include H429, E471, and D501.

The protein belongs to the class-II DAHP synthase family. In terms of assembly, homodimer. The cofactor is Mn(2+). In terms of tissue distribution, mostly expressed in flowers, especially in petal limbs and tubes, and, to a lower extent, in roots, stems, stigmas, anthers, leaves and sepals.

The protein localises to the plastid. The protein resides in the chloroplast. The catalysed reaction is D-erythrose 4-phosphate + phosphoenolpyruvate + H2O = 7-phospho-2-dehydro-3-deoxy-D-arabino-heptonate + phosphate. It functions in the pathway metabolic intermediate biosynthesis; chorismate biosynthesis; chorismate from D-erythrose 4-phosphate and phosphoenolpyruvate: step 1/7. In terms of biological role, involved in the production of volatile organic compounds (VOCs), including floral volatile benzenoids and phenylpropanoids (FVBP), in flowers of fragrant cultivars (e.g. cv. Mitchell and cv. V26), scent attracting pollinators (e.g. the night-active hawkmoth pollinator Manduca sexta). Catalyzes an aldol-like condensation reaction between phosphoenolpyruvate (PEP) and D-erythrose 4-phosphate (E4P) to generate 3-deoxy-D-arabino-heptulosonate 7-phosphate (DAH7P) and inorganic phosphate. The chain is Phospho-2-dehydro-3-deoxyheptonate aldolase 1, chloroplastic from Petunia hybrida (Petunia).